We begin with the raw amino-acid sequence, 428 residues long: Citrate synthase (428 aa).

Residues H265, H306, and D363 contribute to the active site.

It belongs to the citrate synthase family. As to quaternary structure, homohexamer.

The catalysed reaction is oxaloacetate + acetyl-CoA + H2O = citrate + CoA + H(+). It participates in carbohydrate metabolism; tricarboxylic acid cycle; isocitrate from oxaloacetate: step 1/2. With respect to regulation, allosterically inhibited by NADH. This is Citrate synthase (gltA) from Pseudomonas aeruginosa (strain ATCC 15692 / DSM 22644 / CIP 104116 / JCM 14847 / LMG 12228 / 1C / PRS 101 / PAO1).